The following is a 346-amino-acid chain: D-alanine--D-alanine ligase A (346 aa).

Residues 138–332 enclose the ATP-grasp domain; that stretch reads KRLFLAAGVE…FAELCERICR (195 aa). 164–217 contributes to the ATP binding site; sequence QLGFPLVVKPNSQGSTVGLSIVHSQAELQPAIELAGRYGDEVMLERFVAGREVT. The Mg(2+) site is built by Asp286, Glu299, and Asn301.

The protein belongs to the D-alanine--D-alanine ligase family. The cofactor is Mg(2+). It depends on Mn(2+) as a cofactor.

The protein localises to the cytoplasm. The catalysed reaction is 2 D-alanine + ATP = D-alanyl-D-alanine + ADP + phosphate + H(+). It participates in cell wall biogenesis; peptidoglycan biosynthesis. Its function is as follows. Cell wall formation. The chain is D-alanine--D-alanine ligase A from Pseudomonas aeruginosa (strain ATCC 15692 / DSM 22644 / CIP 104116 / JCM 14847 / LMG 12228 / 1C / PRS 101 / PAO1).